Consider the following 642-residue polypeptide: Threonine--tRNA ligase (642 aa).

A TGS domain is found at 1 to 61 (MPVITLPDGS…ENDATLSIIT (61 aa)). Residues 243-534 (DHRKIGKQLD…LTEEFAGFFP (292 aa)) are catalytic. Zn(2+)-binding residues include C334, H385, and H511.

The protein belongs to the class-II aminoacyl-tRNA synthetase family. Homodimer. Requires Zn(2+) as cofactor.

It localises to the cytoplasm. It carries out the reaction tRNA(Thr) + L-threonine + ATP = L-threonyl-tRNA(Thr) + AMP + diphosphate + H(+). In terms of biological role, catalyzes the attachment of threonine to tRNA(Thr) in a two-step reaction: L-threonine is first activated by ATP to form Thr-AMP and then transferred to the acceptor end of tRNA(Thr). Also edits incorrectly charged L-seryl-tRNA(Thr). The polypeptide is Threonine--tRNA ligase (Salmonella paratyphi A (strain ATCC 9150 / SARB42)).